A 218-amino-acid polypeptide reads, in one-letter code: Transmembrane gamma-carboxyglutamic acid protein 1 (218 aa).

The propeptide occupies 1–20 (MGRVFLTGEKANSILKRYPR). Positions 21 to 66 (ANGFFEEIRQGNIERECKEEFCTFEEAREAFENNEKTKEFWSTYTK) constitute a Gla domain. Residues 21–83 (ANGFFEEIRQ…RGSDWFQFYL (63 aa)) lie on the Extracellular side of the membrane. Cysteines 37 and 42 form a disulfide. The helical transmembrane segment at 84-106 (TFPLIFGLFIILLVIFLIWRCFL) threads the bilayer. Topologically, residues 107–218 (RNKTRRQTVT…PMVPVVTTIK (112 aa)) are cytoplasmic. Positions 161 to 195 (TRLSNCDPPPTYEEATGQVNLQRSETEPHLDPPPE) are disordered.

Gla residues are produced after subsequent post-translational modifications of glutamate by a vitamin K-dependent gamma-carboxylase. Highly expressed in the spinal cord.

It localises to the membrane. This is Transmembrane gamma-carboxyglutamic acid protein 1 (PRRG1) from Homo sapiens (Human).